The following is a 206-amino-acid chain: Large ribosomal subunit protein bL25 (206 aa).

A bL25 domain region spans residues Met1–Leu91. Residues Ser92–Glu206 are CTC domain. Positions Ala184–Glu206 are disordered. A compositionally biased stretch (basic and acidic residues) spans Glu195–Glu206.

Belongs to the bacterial ribosomal protein bL25 family. CTC subfamily. As to quaternary structure, part of the 50S ribosomal subunit. Contacts the 5S rRNA.

In terms of biological role, this is one of 3 proteins that mediate the attachment of the 5S rRNA onto the large ribosomal subunit. The protein is Large ribosomal subunit protein bL25 (rplY) of Thermus thermophilus.